The primary structure comprises 404 residues: Probable tRNA sulfurtransferase (404 aa).

The region spanning 60–165 (HEVAESLKEI…DEAAYISYEN (106 aa)) is the THUMP domain. ATP-binding positions include 183–184 (ML), 208–209 (HF), Arg-265, Gly-287, and Gln-296.

It belongs to the ThiI family.

The protein resides in the cytoplasm. It carries out the reaction [ThiI sulfur-carrier protein]-S-sulfanyl-L-cysteine + a uridine in tRNA + 2 reduced [2Fe-2S]-[ferredoxin] + ATP + H(+) = [ThiI sulfur-carrier protein]-L-cysteine + a 4-thiouridine in tRNA + 2 oxidized [2Fe-2S]-[ferredoxin] + AMP + diphosphate. The enzyme catalyses [ThiS sulfur-carrier protein]-C-terminal Gly-Gly-AMP + S-sulfanyl-L-cysteinyl-[cysteine desulfurase] + AH2 = [ThiS sulfur-carrier protein]-C-terminal-Gly-aminoethanethioate + L-cysteinyl-[cysteine desulfurase] + A + AMP + 2 H(+). Its pathway is cofactor biosynthesis; thiamine diphosphate biosynthesis. Catalyzes the ATP-dependent transfer of a sulfur to tRNA to produce 4-thiouridine in position 8 of tRNAs, which functions as a near-UV photosensor. Also catalyzes the transfer of sulfur to the sulfur carrier protein ThiS, forming ThiS-thiocarboxylate. This is a step in the synthesis of thiazole, in the thiamine biosynthesis pathway. The sulfur is donated as persulfide by IscS. The protein is Probable tRNA sulfurtransferase of Streptococcus agalactiae serotype III (strain NEM316).